The following is a 66-amino-acid chain: Large ribosomal subunit protein uL29 (66 aa).

The protein belongs to the universal ribosomal protein uL29 family.

This Lysinibacillus sphaericus (strain C3-41) protein is Large ribosomal subunit protein uL29.